Consider the following 2120-residue polypeptide: Separin (2120 aa).

Ser1126 carries the post-translational modification Phosphoserine. The segment at Ile1299 to Gln1355 is disordered. Phosphoserine is present on residues Ser1396 and Ser1399. Disordered regions lie at residues Ala1412–Met1485 and Gly1507–Arg1561. Basic residues-rich tracts occupy residues Arg1418–Leu1432 and Arg1454–Ser1463. The span at Arg1464–Arg1473 shows a compositional bias: basic and acidic residues. A Phosphoserine modification is found at Ser1508. Basic and acidic residues predominate over residues Pro1548–Pro1558. Residues Pro1945–Leu2040 enclose the Peptidase C50 domain. The active site involves Cys2029.

In terms of assembly, interacts with PTTG1. Interacts with RAD21. In terms of processing, autocleaves. This function, which is not essential for its protease activity, is unknown. Phosphorylated by CDK1. There are 8 Ser/Thr phosphorylation sites. Among them, Ser-1126 phosphorylation is the major site, which conducts to the enzyme inactivation.

The protein resides in the cytoplasm. It is found in the nucleus. The catalysed reaction is All bonds known to be hydrolyzed by this endopeptidase have arginine in P1 and an acidic residue in P4. P6 is often occupied by an acidic residue or by a hydroxy-amino-acid residue, the phosphorylation of which enhances cleavage.. Regulated by at least two independent mechanisms. First, it is inactivated via its interaction with securin/PTTG1, which probably covers its active site. The association with PTTG1 is not only inhibitory, since PTTG1 is also required for activating it, the enzyme being inactive in cells in which PTTG1 is absent. PTTG1 degradation at anaphase, liberates it and triggers RAD21 cleavage. Second, phosphorylation at Ser-1126 inactivates it. The complete phosphorylation during mitosis, is removed when cells undergo anaphase. Activation of the enzyme at the metaphase-anaphase transition probably requires the removal of both securin and inhibitory phosphate. Caspase-like protease, which plays a central role in the chromosome segregation by cleaving the SCC1/RAD21 subunit of the cohesin complex at the onset of anaphase. During most of the cell cycle, it is inactivated by different mechanisms. The sequence is that of Separin (ESPL1) from Homo sapiens (Human).